Reading from the N-terminus, the 1219-residue chain is Disease resistance-like protein DSC1 (1219 aa).

A TIR domain is found at 9–176 (AEFDVFLSFR…EIAVDTFKKL (168 aa)). Residue glutamate 83 is part of the active site. The 250-residue stretch at 197 to 446 (LEKLLSWEDL…DIACFFRSEN (250 aa)) folds into the NB-ARC domain. Residue 216–222 (GMVGIGK) participates in ATP binding. 11 LRR repeats span residues 468–493 (LVDKCLITLSDNRIEMHDMLQTMAKE), 538–563 (TDKIRGIFLDTSKLRAMRLSAKAFQG), 597–619 (PNELTYLHWHGYPLQSIPLDFDP), 620–642 (KNLVDLKLPHSQLEEIWDDEKDV), 665–689 (AHNLERLNLEGCTSLKKLPSTINCL), 690–713 (EKLIYLNLRDCTSLRSLPKGIKTQ), 733–757 (SENVEVLLLDGTVIKSLPESIQTFR), 759–780 (LALLNLKNCKKLKHLSSDLYKL), 804–827 (MESLEILLMDDTSITEMPKMMHLS), 854–877 (CSRLTDLYLSRCSLYKLPDNIGGL), and 878–899 (SSLQSLCLSGNNIENLPESFNQ).

This sequence belongs to the disease resistance NB-LRR family. As to quaternary structure, interacts with CAMTA3 and DSC2.

It carries out the reaction NAD(+) + H2O = ADP-D-ribose + nicotinamide + H(+). Its function is as follows. TIR-NB-LRR receptor-like protein involved in plant defense. Acts as a trigger of hypersensitive response (HR). Functions as a guard of CAMTA3, a negative regulator of immunity, during pathogen infection. The polypeptide is Disease resistance-like protein DSC1 (Arabidopsis thaliana (Mouse-ear cress)).